The primary structure comprises 161 residues: UPF0178 protein BR1979/BS1330_I1973 (161 aa).

Belongs to the UPF0178 family.

This chain is UPF0178 protein BR1979/BS1330_I1973, found in Brucella suis biovar 1 (strain 1330).